The sequence spans 224 residues: Urease accessory protein UreF (224 aa).

The protein belongs to the UreF family. As to quaternary structure, ureD, UreF and UreG form a complex that acts as a GTP-hydrolysis-dependent molecular chaperone, activating the urease apoprotein by helping to assemble the nickel containing metallocenter of UreC. The UreE protein probably delivers the nickel.

Its subcellular location is the cytoplasm. Functionally, required for maturation of urease via the functional incorporation of the urease nickel metallocenter. In Pseudomonas entomophila (strain L48), this protein is Urease accessory protein UreF.